The primary structure comprises 827 residues: Protein arginine N-methyltransferase 9 (827 aa).

TPR repeat units lie at residues 54–87 (QYSL…FPID) and 88–121 (DVIC…NPSS). 2 SAM-dependent MTase PRMT-type domains span residues 124-453 (AKEN…YLRL) and 511-827 (NAVY…RPLQ).

Belongs to the class I-like SAM-binding methyltransferase superfamily. Protein arginine N-methyltransferase family.

It is found in the cytoplasm. It catalyses the reaction L-arginyl-[protein] + 2 S-adenosyl-L-methionine = N(omega),N(omega)'-dimethyl-L-arginyl-[protein] + 2 S-adenosyl-L-homocysteine + 2 H(+). Its function is as follows. Arginine methyltransferase that can both catalyze the formation of omega-N monomethylarginine (MMA) and symmetrical dimethylarginine (sDMA). The sequence is that of Protein arginine N-methyltransferase 9 (prmt9) from Xenopus laevis (African clawed frog).